A 346-amino-acid chain; its full sequence is Dihydroorotase (346 aa).

Zn(2+)-binding residues include His-14 and His-16. Substrate-binding positions include 16–18 (HLR) and Asn-42. Positions 100, 137, and 175 each coordinate Zn(2+). At Lys-100 the chain carries N6-carboxylysine. His-137 serves as a coordination point for substrate. Residue Leu-220 participates in substrate binding. Zn(2+) is bound at residue Asp-248. Residue Asp-248 is part of the active site. 2 residues coordinate substrate: His-252 and Ala-264.

The protein belongs to the metallo-dependent hydrolases superfamily. DHOase family. Class II DHOase subfamily. Homodimer. Requires Zn(2+) as cofactor.

It catalyses the reaction (S)-dihydroorotate + H2O = N-carbamoyl-L-aspartate + H(+). It functions in the pathway pyrimidine metabolism; UMP biosynthesis via de novo pathway; (S)-dihydroorotate from bicarbonate: step 3/3. Catalyzes the reversible cyclization of carbamoyl aspartate to dihydroorotate. The sequence is that of Dihydroorotase from Ruegeria sp. (strain TM1040) (Silicibacter sp.).